The primary structure comprises 467 residues: Cysteine--tRNA ligase (467 aa).

Cys-27 contacts Zn(2+). A 'HIGH' region motif is present at residues 29–39 (PTVYNYIHIGN). Positions 207, 232, and 236 each coordinate Zn(2+). Positions 264–268 (KMSKS) match the 'KMSKS' region motif. Lys-267 is a binding site for ATP.

The protein belongs to the class-I aminoacyl-tRNA synthetase family. As to quaternary structure, monomer. Zn(2+) is required as a cofactor.

Its subcellular location is the cytoplasm. The catalysed reaction is tRNA(Cys) + L-cysteine + ATP = L-cysteinyl-tRNA(Cys) + AMP + diphosphate. The protein is Cysteine--tRNA ligase of Caldanaerobacter subterraneus subsp. tengcongensis (strain DSM 15242 / JCM 11007 / NBRC 100824 / MB4) (Thermoanaerobacter tengcongensis).